The chain runs to 140 residues: Nucleoside diphosphate kinase (140 aa).

ATP is bound by residues Lys11, Phe59, Arg87, Thr93, Arg104, and Asn114. His117 acts as the Pros-phosphohistidine intermediate in catalysis.

This sequence belongs to the NDK family. As to quaternary structure, homotetramer. It depends on Mg(2+) as a cofactor.

It localises to the cytoplasm. It carries out the reaction a 2'-deoxyribonucleoside 5'-diphosphate + ATP = a 2'-deoxyribonucleoside 5'-triphosphate + ADP. It catalyses the reaction a ribonucleoside 5'-diphosphate + ATP = a ribonucleoside 5'-triphosphate + ADP. Functionally, major role in the synthesis of nucleoside triphosphates other than ATP. The ATP gamma phosphate is transferred to the NDP beta phosphate via a ping-pong mechanism, using a phosphorylated active-site intermediate. The sequence is that of Nucleoside diphosphate kinase from Ruegeria sp. (strain TM1040) (Silicibacter sp.).